The chain runs to 512 residues: Lysine--tRNA ligase (512 aa).

E422 and E429 together coordinate Mg(2+).

The protein belongs to the class-II aminoacyl-tRNA synthetase family. As to quaternary structure, homodimer. It depends on Mg(2+) as a cofactor.

Its subcellular location is the cytoplasm. The enzyme catalyses tRNA(Lys) + L-lysine + ATP = L-lysyl-tRNA(Lys) + AMP + diphosphate. In Paraburkholderia phymatum (strain DSM 17167 / CIP 108236 / LMG 21445 / STM815) (Burkholderia phymatum), this protein is Lysine--tRNA ligase.